A 183-amino-acid polypeptide reads, in one-letter code: MFIFIKHGDNQQFLVNTNCAVVVLLYYIRSKVKLPKTNTIDLCEQTGKMKMLFLMKPNHAEYASKYLTARSTYYVCKVERGPPGTRLENAYRAFVPLLKNPEPWLLVALRIQCDALERRRIQMLKMKEAKKVVIIEPPASVPSKQSGRSDKKKSTRKSPTFRNRPDFRKNKGRQLNKTTKQKK.

The interval 136 to 183 (EPPASVPSKQSGRSDKKKSTRKSPTFRNRPDFRKNKGRQLNKTTKQKK) is disordered. Residues 170 to 183 (NKGRQLNKTTKQKK) show a composition bias toward basic residues.

This is an uncharacterized protein from Homo sapiens (Human).